Consider the following 100-residue polypeptide: Co-chaperonin GroES (100 aa).

The protein belongs to the GroES chaperonin family. As to quaternary structure, heptamer of 7 subunits arranged in a ring. Interacts with the chaperonin GroEL.

Its subcellular location is the cytoplasm. Its function is as follows. Together with the chaperonin GroEL, plays an essential role in assisting protein folding. The GroEL-GroES system forms a nano-cage that allows encapsulation of the non-native substrate proteins and provides a physical environment optimized to promote and accelerate protein folding. GroES binds to the apical surface of the GroEL ring, thereby capping the opening of the GroEL channel. The polypeptide is Co-chaperonin GroES (Mycobacterium leprae (strain Br4923)).